The sequence spans 733 residues: Photosystem I P700 chlorophyll a apoprotein A2 (733 aa).

The next 8 membrane-spanning stretches (helical) occupy residues 46–69 (IFASHFGQLAIIFLWTSGNLFHVA), 135–158 (LYNGSLFLLFVAGLFLFAGWLHLQ), 175–199 (LNHHLSGLFGVSSLAWTGHLVHVAI), 273–291 (MAHHHLAIAVVFIIAGHQY), 330–353 (LHFQLGLALASVGVLCSLTAQHMY), 369–395 (AALYSHHQYIAGFIMCGAFAHGAIFFI), 417–439 (AIISHLSWVSLFLGFHTLGLYVH), and 516–534 (FLVHHAIALGLHTTTLILV). 2 residues coordinate [4Fe-4S] cluster: Cys-558 and Cys-567. 2 helical membrane passes run 574 to 595 (AFYLAVFWELNTVSWTVFYFHW) and 642 to 664 (LSVWAWMFLFGHLIYATGFMFLI). Chlorophyll a contacts are provided by His-653, Met-661, and Tyr-669. Trp-670 is a phylloquinone binding site. A helical membrane pass occupies residues 706–726 (LVGLTHFAVGFVLTYAAFVIA).

This sequence belongs to the PsaA/PsaB family. As to quaternary structure, the PsaA/B heterodimer binds the P700 chlorophyll special pair and subsequent electron acceptors. PSI consists of a core antenna complex that captures photons, and an electron transfer chain that converts photonic excitation into a charge separation. The eukaryotic PSI reaction center is composed of at least 11 subunits. P700 is a chlorophyll a/chlorophyll a' dimer, A0 is one or more chlorophyll a, A1 is one or both phylloquinones and FX is a shared 4Fe-4S iron-sulfur center. is required as a cofactor.

Its subcellular location is the plastid. It is found in the chloroplast thylakoid membrane. The enzyme catalyses reduced [plastocyanin] + hnu + oxidized [2Fe-2S]-[ferredoxin] = oxidized [plastocyanin] + reduced [2Fe-2S]-[ferredoxin]. In terms of biological role, psaA and PsaB bind P700, the primary electron donor of photosystem I (PSI), as well as the electron acceptors A0, A1 and FX. PSI is a plastocyanin/cytochrome c6-ferredoxin oxidoreductase, converting photonic excitation into a charge separation, which transfers an electron from the donor P700 chlorophyll pair to the spectroscopically characterized acceptors A0, A1, FX, FA and FB in turn. Oxidized P700 is reduced on the lumenal side of the thylakoid membrane by plastocyanin or cytochrome c6. This Ostreococcus tauri protein is Photosystem I P700 chlorophyll a apoprotein A2.